Consider the following 84-residue polypeptide: Delta-stichotoxin-Shd3a (84 aa).

Residues 1 to 19 (MAYLKIVLVALMLVLGVSA) form the signal peptide. Positions 20-33 (MRLSDQEDQDVSVV) are excised as a propeptide. Disulfide bonds link C38–C78, C40–C68, and C61–C79. K83 carries the post-translational modification Lysine amide.

This sequence belongs to the sea anemone sodium channel inhibitory toxin family. Type II subfamily.

The protein resides in the secreted. The protein localises to the nematocyst. Its function is as follows. Binds specifically to voltage-gated sodium channels (Nav), thereby delaying their inactivation during signal transduction. The chain is Delta-stichotoxin-Shd3a from Stichodactyla haddoni (Saddle carpet anemone).